A 689-amino-acid polypeptide reads, in one-letter code: Beta-adrenergic receptor kinase 1 (689 aa).

Residues 1-190 (MADLEAVLAD…ELNIHLTMND (190 aa)) form an N-terminal region. The 122-residue stretch at 54–175 (TFEKIFSQKL…IESDKFTRFC (122 aa)) folds into the RGS domain. Positions 191 to 453 (FSVHRIIGRG…AQEIKESPFF (263 aa)) constitute a Protein kinase domain. ATP-binding positions include 197–205 (IGRGGFGEV) and Lys-220. Asp-317 (proton acceptor) is an active-site residue. The 68-residue stretch at 454-521 (RSLDWQMVFL…TISERWQQEV (68 aa)) folds into the AGC-kinase C-terminal domain. In terms of domain architecture, PH spans 558–652 (DCIMHGYMSK…WKKELRDAYR (95 aa)). Position 670 is a phosphoserine (Ser-670).

It belongs to the protein kinase superfamily. AGC Ser/Thr protein kinase family. GPRK subfamily. As to quaternary structure, interacts with the heterodimer formed by GNB1 and GNG2. Interacts with GIT1. Interacts with, and phosphorylates chemokine-stimulated CCR5. Interacts with ARRB1. Interacts with LPAR1 and LPAR2. Interacts with RALA in response to LPAR1 activation. ADRBK1 and RALA mutually inhibit each other's binding to LPAR1. Interacts with ADRB2. Expressed at low levels in brain cortex, hippocampus, striatum, hypothalamus, cerebellum and brainstem (at protein level).

It is found in the cytoplasm. The protein localises to the cell membrane. It localises to the postsynapse. The protein resides in the presynapse. The enzyme catalyses [beta-adrenergic receptor] + ATP = [beta-adrenergic receptor]-phosphate + ADP + H(+). In contrast to other AGC family kinases, the catalytic activity is solely regulated by the binding of substrates and ligands, not by phosphorylation of the kinase domain. Functionally, specifically phosphorylates the agonist-occupied form of the beta-adrenergic and closely related receptors, probably inducing a desensitization of them. Key regulator of LPAR1 signaling. Competes with RALA for binding to LPAR1 thus affecting the signaling properties of the receptor. Desensitizes LPAR1 and LPAR2 in a phosphorylation-independent manner. Positively regulates ciliary smoothened (SMO)-dependent Hedgehog (Hh) signaling pathway by facilitating the trafficking of SMO into the cilium and the stimulation of SMO activity. Inhibits relaxation of airway smooth muscle in response to blue light. The sequence is that of Beta-adrenergic receptor kinase 1 from Rattus norvegicus (Rat).